The sequence spans 337 residues: MEPETEGPPPTIPVTPLQQMIASCTGAVLTSLMVTPLDVVKIRLQAQNNPFPKGKCFLYSNGLMDHMCVCEEESKKAWYKKPGNFRGTLDAFLKILRNEGIKSLWSGLPPTLVMAIPATVIYFTCYEQLSAFLKTKLGENETRIPIVAGVVARFGAVTVISPLELIRTKVQSKKFSYKELYQFVSMRVSEDGWISLWKGWAPTILRDVPFSAMYWYNYENLKRWLCEKSGLYEPTFMINFTSGALSGSFAAVATLPFDVVKTQKQTQLWTNEYCKFPAPLDMSTWTIMKNIVADKGFSGLFTGLIPRLVKIVPACAIMISSYELGKSFFQKQNVESR.

3 Solcar repeats span residues 14–132, 140–224, and 234–328; these read VTPL…LSAF, NETR…LKRW, and PTFM…GKSF. The next 6 membrane-spanning stretches (helical) occupy residues 20-40, 104-124, 146-166, 200-221, 240-260, and 299-319; these read MIAS…LDVV, LWSG…IYFT, IVAG…LELI, WAPT…YENL, FTSG…FDVV, and GLFT…AIMI.

Belongs to the mitochondrial carrier (TC 2.A.29) family.

The protein localises to the mitochondrion inner membrane. The catalysed reaction is glutathione(in) = glutathione(out). Its function is as follows. Probable mitochondrial transporter required for glutathione import into mitochondria. Glutathione, which plays key roles in oxidative metabolism, is produced exclusively in the cytosol and is imported in many organelles. Mitochondrial glutathione is required for the activity and stability of proteins containing iron-sulfur clusters, as well as erythropoiesis. This chain is Mitochondrial glutathione transporter SLC25A40, found in Mus musculus (Mouse).